The following is a 1711-amino-acid chain: Receptor-type tyrosine-protein phosphatase V (1711 aa).

The first 17 residues, 1–17, serve as a signal peptide directing secretion; it reads MRPLILLAALLWLQGFL. Residues 18–1074 are Extracellular-facing; sequence AEDDACSSLE…SEPRASISLA (1057 aa). 10 consecutive Fibronectin type-III domains span residues 37 to 129, 130 to 222, 218 to 305, 306 to 391, 393 to 470, 475 to 569, 565 to 654, 655 to 749, 744 to 831, and 832 to 926; these read PLLS…TAPT, VVRG…VPPD, PVPP…EWTY, PSYP…LAES, ALPR…ISGY, PPQS…APPT, PAPP…TGWT, PPSA…IPNE, PLIP…VLSV, and EPGP…SAEA. 7 N-linked (GlcNAc...) asparagine glycosylation sites follow: asparagine 42, asparagine 74, asparagine 89, asparagine 117, asparagine 174, asparagine 239, and asparagine 259. Asparagine 431 carries N-linked (GlcNAc...) asparagine glycosylation. Residues asparagine 570, asparagine 620, asparagine 649, asparagine 663, and asparagine 737 are each glycosylated (N-linked (GlcNAc...) asparagine). 4 N-linked (GlcNAc...) asparagine glycosylation sites follow: asparagine 851, asparagine 882, asparagine 970, and asparagine 982. A helical membrane pass occupies residues 1075 to 1095; the sequence is IIPLTVMLGAVVGSIVIVCAV. The Cytoplasmic portion of the chain corresponds to 1096-1711; the sequence is LCLLRWRCLK…PRAGKWPAPC (616 aa). 2 consecutive Tyrosine-protein phosphatase domains span residues 1150–1409 and 1427–1696; these read FFQE…LLNK and DFAQ…LNSA. Substrate contacts are provided by residues aspartate 1316, 1350 to 1356, and glutamine 1394; that span reads CSAGVGR. The active-site Phosphocysteine intermediate is the cysteine 1350.

This sequence belongs to the protein-tyrosine phosphatase family. Receptor class 3 subfamily. Post-translationally, the cytoplasmic domain contains potential phosphorylation sites. In terms of tissue distribution, bone and testis. In the latter, restricted to the basal portion of the seminiferous tubule.

The protein localises to the membrane. The enzyme catalyses O-phospho-L-tyrosyl-[protein] + H2O = L-tyrosyl-[protein] + phosphate. In terms of biological role, protein tyrosine phosphatase that acts as a regulator of energy metabolism. Prevents decarboxylation of osteocalcin (Bglap) via an indirect mechanism, preventing the hormone activity of osteocalcin. Functions in signaling pathways during bone remodeling, as well as serve a broader role in cell interactions associated with differentiation in bone and testis. Associated with differentiation in bone and testis. This is Receptor-type tyrosine-protein phosphatase V (Ptprv) from Rattus norvegicus (Rat).